Reading from the N-terminus, the 271-residue chain is MKGFFLIAGFLLFARALCASWNVEEGTLQLSSQDLESENAYDLKFSQIQSSTVYELTGDETLNLKFTCILNGTGAIPHQAHLLLSDTEHPTLAVIYPASVSQGGVASLELRLFDIPTSLLRSDSTLTAKLLVASFGETIPFSLPLGQLSINVPPSLYHKAEFSPLDELSPKEVILHTFSPPPKRANYFLSICFSVSVVVSLIGLLGVWQKLLPKSNVYSVSSSSFARTFGFASLAVAEILLFIYWTSLSIFQFGAYAAGVAIMCGIAAKSL.

A signal peptide spans 1–18; that stretch reads MKGFFLIAGFLLFARALC. The Lumenal segment spans residues 19–187; that stretch reads ASWNVEEGTL…FSPPPKRANY (169 aa). Residues 188–208 form a helical membrane-spanning segment; that stretch reads FLSICFSVSVVVSLIGLLGVW. Residues 209–230 lie on the Cytoplasmic side of the membrane; it reads QKLLPKSNVYSVSSSSFARTFG. A helical transmembrane segment spans residues 231-251; sequence FASLAVAEILLFIYWTSLSIF. The Lumenal portion of the chain corresponds to 252–271; sequence QFGAYAAGVAIMCGIAAKSL.

Its subcellular location is the endoplasmic reticulum membrane. This is an uncharacterized protein from Schizosaccharomyces pombe (strain 972 / ATCC 24843) (Fission yeast).